The chain runs to 1091 residues: Constitutive coactivator of PPAR-gamma-like protein 2 (1091 aa).

The span at 35 to 53 (QQQHLHRQLPPAALAPGAP) shows a compositional bias: low complexity. 4 disordered regions span residues 35-105 (QQQH…HPPP), 503-575 (NCLT…SEPH), 966-1010 (SRSS…QGSS), and 1037-1077 (VEEK…KNHV). Arg-57 is modified (omega-N-methylarginine). The segment covering 82–95 (SRHHHPAHHFHHHG) has biased composition (basic residues). A compositionally biased stretch (polar residues) spans 532–544 (GSEQITEAVQQQP). Residues 966–976 (SRSSRSRGSFG) show a composition bias toward low complexity. Position 972 is an omega-N-methylarginine (Arg-972). Basic and acidic residues predominate over residues 1062–1077 (SDDHCLPVKNGEKNHV).

This sequence belongs to the constitutive coactivator of PPAR-gamma family.

The protein is Constitutive coactivator of PPAR-gamma-like protein 2 (Fam120c) of Mus musculus (Mouse).